The following is a 242-amino-acid chain: Biosynthetic peptidoglycan transglycosylase (242 aa).

Residues 19 to 39 (ILAALAVFWGGGIALFSVVPV) form a helical membrane-spanning segment.

It belongs to the glycosyltransferase 51 family.

It localises to the cell inner membrane. The catalysed reaction is [GlcNAc-(1-&gt;4)-Mur2Ac(oyl-L-Ala-gamma-D-Glu-L-Lys-D-Ala-D-Ala)](n)-di-trans,octa-cis-undecaprenyl diphosphate + beta-D-GlcNAc-(1-&gt;4)-Mur2Ac(oyl-L-Ala-gamma-D-Glu-L-Lys-D-Ala-D-Ala)-di-trans,octa-cis-undecaprenyl diphosphate = [GlcNAc-(1-&gt;4)-Mur2Ac(oyl-L-Ala-gamma-D-Glu-L-Lys-D-Ala-D-Ala)](n+1)-di-trans,octa-cis-undecaprenyl diphosphate + di-trans,octa-cis-undecaprenyl diphosphate + H(+). The protein operates within cell wall biogenesis; peptidoglycan biosynthesis. Peptidoglycan polymerase that catalyzes glycan chain elongation from lipid-linked precursors. This is Biosynthetic peptidoglycan transglycosylase from Salmonella heidelberg (strain SL476).